The sequence spans 792 residues: 5-methyltetrahydropteroyltriglutamate--homocysteine methyltransferase (792 aa).

Residues 16–19 (RELK) and Lys-112 each bind 5-methyltetrahydropteroyltri-L-glutamate. L-homocysteine is bound by residues 432–434 (IGS) and Glu-485. L-methionine is bound by residues 432-434 (IGS) and Glu-485. Residues 516-517 (RC) and Trp-562 each bind 5-methyltetrahydropteroyltri-L-glutamate. Asp-600 provides a ligand contact to L-homocysteine. Position 600 (Asp-600) interacts with L-methionine. Residue Glu-606 participates in 5-methyltetrahydropteroyltri-L-glutamate binding. 3 residues coordinate Zn(2+): His-642, Cys-644, and Glu-666. His-695 functions as the Proton donor in the catalytic mechanism. Cys-727 provides a ligand contact to Zn(2+).

This sequence belongs to the vitamin-B12 independent methionine synthase family. Requires Zn(2+) as cofactor.

The catalysed reaction is 5-methyltetrahydropteroyltri-L-glutamate + L-homocysteine = tetrahydropteroyltri-L-glutamate + L-methionine. Its pathway is amino-acid biosynthesis; L-methionine biosynthesis via de novo pathway; L-methionine from L-homocysteine (MetE route): step 1/1. Catalyzes the transfer of a methyl group from 5-methyltetrahydrofolate to homocysteine resulting in methionine formation. The chain is 5-methyltetrahydropteroyltriglutamate--homocysteine methyltransferase from Cupriavidus necator (strain ATCC 17699 / DSM 428 / KCTC 22496 / NCIMB 10442 / H16 / Stanier 337) (Ralstonia eutropha).